The following is a 520-amino-acid chain: Cell division control protein 3 (520 aa).

Positions 1-24 (MSLKEEQVSIKQDPEQEERQHDQF) are enriched in basic and acidic residues. A disordered region spans residues 1–83 (MSLKEEQVSI…SSQSEKGQVL (83 aa)). N-acetylserine is present on Ser2. Phosphoserine is present on Ser2. Lys4 is covalently cross-linked (Glycyl lysine isopeptide (Lys-Gly) (interchain with G-Cter in SUMO)). Ser9 carries the phosphoserine modification. Glycyl lysine isopeptide (Lys-Gly) (interchain with G-Cter in SUMO) cross-links involve residues Lys11 and Lys30. Phosphothreonine is present on Thr47. A compositionally biased stretch (basic and acidic residues) spans 51-64 (DSERFEAAESDVKV). The residue at position 60 (Ser60) is a Phosphoserine. A Glycyl lysine isopeptide (Lys-Gly) (interchain with G-Cter in SUMO) cross-link involves residue Lys63. The residue at position 77 (Ser77) is a Phosphoserine. The region spanning 116-411 (NGFSFNLLCV…ENYRSSKLAK (296 aa)) is the Septin-type G domain. The G1 motif stretch occupies residues 126 to 133 (GPDGIGKT). 126–133 (GPDGIGKT) lines the GTP pocket. The span at 156–167 (ELANDQEEEEGQ) shows a compositional bias: acidic residues. A disordered region spans residues 156–181 (ELANDQEEEEGQGEGHENQSQEQRHK). Residues 168 to 179 (GEGHENQSQEQR) show a composition bias toward basic and acidic residues. Position 175 is a phosphoserine (Ser175). The segment at 204 to 207 (DTEG) is G3 motif. Residues Gly207, 287–295 (KSDILTDEE), Gly344, and Arg360 contribute to the GTP site. The segment at 286–289 (AKSD) is G4 motif. A Glycyl lysine isopeptide (Lys-Gly) (interchain with G-Cter in SUMO) cross-link involves residue Lys287. Positions 427 to 508 (ISKQQEEKTL…INSASPNVNH (82 aa)) form a coiled coil. Position 468 is a phosphothreonine (Thr468). The segment at 496–520 (ELSINSASPNVNHSPVPTKKKGFLR) is disordered. A compositionally biased stretch (polar residues) spans 497 to 510 (LSINSASPNVNHSP). Phosphoserine is present on Ser509.

It belongs to the TRAFAC class TrmE-Era-EngA-EngB-Septin-like GTPase superfamily. Septin GTPase family. Component of the septin complex which consists of CDC3, CDC10, CDC11, CDC12 and probably SHS1 and rearranges to a cortical collar of highly ordered filaments at the mother-bud-neck. A complex formed by CDC3, CDC10, CDC11 and CDC12 is capable of forming long filaments in vitro and the components seem to be present in a 2:2:2:2 arrangement in vivo. The filaments are proposed to be formed by the end-to-end polymerization of CDC3-CDC12-CDC11 complexes with CDC10 serving as a bridge to bundle the polymers into paired filaments. Component of the GIN4 complex composed of at least BNI5, CDC3, CDC10, CDC11, CDC12, GIN4, NAP1 and SHS1. Self-associates. Interacts with SIZ1 and SYP1. In terms of processing, phosphorylated by CDC28. Phosphorylation at the end of G1 may facilitate initiation of a new cell cycle by promoting disassembly of the obsolete septin ring from the previous cell cycle. Sumoylated during mitosis on the mother cell side of the bud neck by UBC9/SIZ1. Sumoylation probably plays a central role in regulating septin ring disassembly during the cell cycle.

It localises to the membrane. The protein localises to the bud neck. Septins are GTPases involved in cytokinesis that assemble early in the cell cycle as a patch at the incipient bud site and form a ring approximate 15 minutes before bud emergence, which transforms into an hour-glass shaped collar of cortical filaments that spans both sides of the mother-bud neck. This collar persists until just before cytokinesis, when it splits into two rings that occupy opposite sides of the neck. The septins at the bud neck serve as a structural scaffold that recruits different components involved in diverse processes at specific stages during the cell cycle. Many proteins bind asymmetrically to the septin collar. The septin assembly is regulated by protein kinases GIN4 and/or CLA4. May act by recruiting MYO1 and HOF1, a protein involved in septation, to the site of cleavage. Septins are also involved in cell morphogenesis, bud site selection, chitin deposition, cell cycle regulation, cell compartmentalization and spore wall formation. The chain is Cell division control protein 3 (CDC3) from Saccharomyces cerevisiae (strain ATCC 204508 / S288c) (Baker's yeast).